A 3655-amino-acid polypeptide reads, in one-letter code: NuA4 acetyltransferase complex subunit Tra2 (3655 aa).

Residues 8 to 2459 (SLSSSIELLK…REYHIRLLGK (2452 aa)) form an HEAT region. HEAT repeat units lie at residues 46 to 89 (QLYA…CAHR), 94 to 131 (QYAQSCVLSFISLIKADNEEVAVFCLKVIMDIFKTFKF), 149 to 188 (TNLPYLIPSIFVENPKSNEEENTTLAFGSYLSTETSIIQQ), 230 to 268 (PGVQAIIPCFLKMVQIDVPIDIASYAMIEKDSSIDFIEF), 300 to 338 (LSEKDIIPDIVIKLLRRCPFDMCFARKELLVATRHILST), 374 to 412 (STLADLLHHVRDELNETQIRKSIMIYSTNMHDLTLSIGL), 438 to 475 (FLLLSIFDSFVNKFSELNDSLDQFFKKKYEEEIKETKS), 606 to 643 (IFLKVFETNLPTFFDQLKKNLTLFHIPQFLLSNESTSS), 644 to 683 (KFLNILLRFLLSRIEELGSSDIRHGSVLLRLFRLSFVTVS), 735 to 772 (SLYKEVMPLLHALLEAFNSLLISARTPKEKDLFTELCL), 783 to 820 (PYMSYLMRPLVMSLKSSQELVSQGLRTFELCLDNLTPD), 828 to 867 (PYIEDLMNALWSHLQPLPYNYNHSHTALKILGKLGGRNRK), 1100 to 1141 (AFIL…QDHS), 1147 to 1184 (DRQVDILTALFFTLKDTTSEVPTVCKDHVMDVLKQLFR), 1193 to 1230 (EIAPGILGHLVLELSNHNSVVRSSTQKLLSLLSELSNT), 1429 to 1470 (RKLL…LFHL), 1665 to 1704 (NLVSDLTAHLVKKIEEPDLENNVKLILNLILSKDYGFLLK), 1709 to 1746 (GILLTYLNQNVSSLEKCNQIFSIFYEVFFQHPSTNVYA), 1753 to 1790 (IGALQIISFFLKNVPEITVQHQTEMLKMCSLFGNSEDV), 1808 to 1846 (QFPYELVNVVYMALLKSSPIEVRHLVKSSFDNIFSYIFS), 1891 to 1934 (EHRG…WNDL), 1973 to 2011 (SEAISLLERLLSSGTWASLGMKLSFFTKSITHFDATDAN), 2036 to 2073 (ENLSDLKFLLEKSLENESVGVQSAIGNFVSTILTLSNT), 2120 to 2157 (DALHTLLPGFMRCFHKVAKEFLSLGSQPSGNSLNLQIV), 2183 to 2221 (DQRRWFLSALVQIIEKSSSYEICNYLLEIVRGWIMNSPV), and 2401 to 2438 (DFVLPVLSLQFSNSKIAEYLWRDFFNASVCSFTKDEIP). A head region spans residues 2460–3655 (TPNVLETILT…QMDQLWQAWL (1196 aa)). Positions 2484-3045 (LLVYLSKTYG…HFQLRTAYED (562 aa)) constitute an FAT domain. The segment at 3059–3105 (RGNSRLRENDSSSDNKSKDLSPSGSFSSVSQFNSKNGSPSSIDSSEK) is disordered. The span at 3063-3077 (RLRENDSSSDNKSKD) shows a compositional bias: basic and acidic residues. The segment covering 3078–3092 (LSPSGSFSSVSQFNS) has biased composition (low complexity). The PI3K/PI4K catalytic domain occupies 3285–3625 (VPNVDLVRGH…VISHNVPEDL (341 aa)). A G-loop region spans residues 3291 to 3297 (VRGHTMC). The tract at residues 3491 to 3499 (NIGGRSPQK) is catalytic loop. The interval 3511-3536 (SQDLLPSMTSNQPVFHNTEAVPFRLT) is activation loop. The region spanning 3623 to 3655 (EDLPLNQTLVDLVSQATNPQQLAQMDQLWQAWL) is the FATC domain.

It belongs to the PI3/PI4-kinase family. TRA1 subfamily. As to quaternary structure, component of the NuA4 acetyltransferase complex. Tra1 is the scaffold subunit for binding to a variety of transcription activators or transcription factors to recruit NuA4 for targeted gene activation. Requires Hsp90 and its co-chaperone, the Triple-T complex (TTT), for its incorporation into NuA4. Interacts with tel2.

Component of the NuA4 histone H4/H2A acetyltransferase involved in transcription and DNA repair. In Schizosaccharomyces pombe (strain 972 / ATCC 24843) (Fission yeast), this protein is NuA4 acetyltransferase complex subunit Tra2.